The chain runs to 298 residues: Leucine-rich repeat-containing protein 55 (298 aa).

Residues 1–34 (MGDTWAQLPWPGPPHSALLLVFFLLAAGVMHSDA) form the signal peptide. The LRRNT domain occupies 35–65 (GASCPVLCTCRNQVVDCSNQRLFSVPPDLPM). 2 disulfide bridges follow: Cys-38–Cys-44 and Cys-42–Cys-51. 5 LRR repeats span residues 66–87 (DTRN…YLTC), 90–111 (ELRV…LFLH), 114–135 (RLAH…MFRE), 138–160 (GLVH…AFQG), and 163–186 (HLRD…EGLP). The LRRCT domain maps to 196 to 251 (NPWVCGCTMEPLLKWLRNRIQRCTADSQLAECRGPPEVEGAPLFSLTEESFKACHL). Disulfide bonds link Cys-200-Cys-227 and Cys-202-Cys-249. A helical transmembrane segment spans residues 259–279 (LFIAFVGFVVSIASVATNFLL).

Interacts with KCNMA1.

The protein localises to the cell membrane. Its function is as follows. Auxiliary protein of the large-conductance, voltage and calcium-activated potassium channel (BK alpha). Modulates gating properties by producing a marked shift in the BK channel's voltage dependence of activation in the hyperpolarizing direction, and in the absence of calcium. In Rattus norvegicus (Rat), this protein is Leucine-rich repeat-containing protein 55 (Lrrc55).